Here is a 337-residue protein sequence, read N- to C-terminus: Ornithine carbamoyltransferase (337 aa).

Carbamoyl phosphate-binding positions include 56 to 59 (STRT), glutamine 83, arginine 107, and 134 to 137 (HPTQ). L-ornithine is bound by residues asparagine 168, aspartate 232, and 236–237 (SM). Carbamoyl phosphate contacts are provided by residues 274–275 (CL) and arginine 320.

This sequence belongs to the aspartate/ornithine carbamoyltransferase superfamily. OTCase family.

The protein localises to the cytoplasm. It carries out the reaction carbamoyl phosphate + L-ornithine = L-citrulline + phosphate + H(+). The protein operates within amino-acid biosynthesis; L-arginine biosynthesis; L-arginine from L-ornithine and carbamoyl phosphate: step 1/3. Reversibly catalyzes the transfer of the carbamoyl group from carbamoyl phosphate (CP) to the N(epsilon) atom of ornithine (ORN) to produce L-citrulline. The protein is Ornithine carbamoyltransferase of Shigella flexneri serotype 5b (strain 8401).